Here is a 285-residue protein sequence, read N- to C-terminus: Probable endonuclease 4 (285 aa).

Residues His-69, His-109, Glu-145, Asp-179, His-182, His-216, Asp-229, His-231, and Glu-261 each contribute to the Zn(2+) site.

Belongs to the AP endonuclease 2 family. Zn(2+) serves as cofactor.

It carries out the reaction Endonucleolytic cleavage to 5'-phosphooligonucleotide end-products.. Its function is as follows. Endonuclease IV plays a role in DNA repair. It cleaves phosphodiester bonds at apurinic or apyrimidinic (AP) sites, generating a 3'-hydroxyl group and a 5'-terminal sugar phosphate. The polypeptide is Probable endonuclease 4 (Salmonella arizonae (strain ATCC BAA-731 / CDC346-86 / RSK2980)).